A 104-amino-acid polypeptide reads, in one-letter code: Iron-sulfur cluster assembly protein CyaY (104 aa).

The protein belongs to the frataxin family.

Involved in iron-sulfur (Fe-S) cluster assembly. May act as a regulator of Fe-S biogenesis. The sequence is that of Iron-sulfur cluster assembly protein CyaY from Vibrio vulnificus (strain CMCP6).